Here is a 205-residue protein sequence, read N- to C-terminus: uncharacterized protein (205 aa).

This sequence to M.jannaschii MJ0638 and MJ1252 and M.tuberculosis Rv2003c.

This is an uncharacterized protein from Methanocaldococcus jannaschii (strain ATCC 43067 / DSM 2661 / JAL-1 / JCM 10045 / NBRC 100440) (Methanococcus jannaschii).